We begin with the raw amino-acid sequence, 192 residues long: Pyridoxal 5'-phosphate synthase subunit PdxT (192 aa).

46 to 48 provides a ligand contact to L-glutamine; the sequence is GES. The active-site Nucleophile is the Cys-78. L-glutamine is bound by residues Arg-106 and 135-136; that span reads IR. Active-site charge relay system residues include His-171 and Glu-173.

It belongs to the glutaminase PdxT/SNO family. As to quaternary structure, in the presence of PdxS, forms a dodecamer of heterodimers. Only shows activity in the heterodimer.

The enzyme catalyses aldehydo-D-ribose 5-phosphate + D-glyceraldehyde 3-phosphate + L-glutamine = pyridoxal 5'-phosphate + L-glutamate + phosphate + 3 H2O + H(+). The catalysed reaction is L-glutamine + H2O = L-glutamate + NH4(+). It functions in the pathway cofactor biosynthesis; pyridoxal 5'-phosphate biosynthesis. Its function is as follows. Catalyzes the hydrolysis of glutamine to glutamate and ammonia as part of the biosynthesis of pyridoxal 5'-phosphate. The resulting ammonia molecule is channeled to the active site of PdxS. This Kosmotoga olearia (strain ATCC BAA-1733 / DSM 21960 / TBF 19.5.1) protein is Pyridoxal 5'-phosphate synthase subunit PdxT.